A 608-amino-acid polypeptide reads, in one-letter code: Probable Ufm1-specific protease 2 (608 aa).

Catalysis depends on residues C441, D565, and H567.

The protein belongs to the peptidase C78 family.

Functionally, thiol protease which recognizes and hydrolyzes the peptide bond at the C-terminal Gly of UFM1, a ubiquitin-like modifier protein bound to a number of target proteins. Does not hydrolyze SUMO1 or ISG15 ubiquitin-like proteins. In Drosophila pseudoobscura pseudoobscura (Fruit fly), this protein is Probable Ufm1-specific protease 2.